The primary structure comprises 382 residues: Chaperone protein DnaJ 2 (382 aa).

One can recognise a J domain in the interval 4 to 68 (DYYGLLGVSK…DKRRIVDLGG (65 aa)). The segment at 132–214 (GVTKQVTVDT…CMGDGRIRAR (83 aa)) adopts a CR-type zinc-finger fold. Zn(2+)-binding residues include cysteine 145, cysteine 148, cysteine 162, cysteine 165, cysteine 188, cysteine 191, cysteine 202, and cysteine 205. CXXCXGXG motif repeat units lie at residues 145 to 152 (CDRCQGKG), 162 to 169 (CDTCGGRG), 188 to 195 (CPTCRGVG), and 202 to 209 (CQQCMGDG).

The protein belongs to the DnaJ family. In terms of assembly, homodimer. Interacts with RNase J. Zn(2+) is required as a cofactor.

The protein localises to the cytoplasm. In terms of biological role, participates actively in the response to hyperosmotic and heat shock by preventing the aggregation of stress-denatured proteins and by disaggregating proteins, also in an autonomous, DnaK-independent fashion. Unfolded proteins bind initially to DnaJ; upon interaction with the DnaJ-bound protein, DnaK hydrolyzes its bound ATP, resulting in the formation of a stable complex. GrpE releases ADP from DnaK; ATP binding to DnaK triggers the release of the substrate protein, thus completing the reaction cycle. Several rounds of ATP-dependent interactions between DnaJ, DnaK and GrpE are required for fully efficient folding. Also involved, together with DnaK and GrpE, in the DNA replication of plasmids through activation of initiation proteins. Inhibits the beta-lactamase and RNase activity of RNase J. The chain is Chaperone protein DnaJ 2 from Mycobacterium tuberculosis (strain ATCC 25618 / H37Rv).